A 245-amino-acid polypeptide reads, in one-letter code: MDTNSIPKYSIRGHNIWGFKDMAHFLDYLYQGAQIKSGSLIAINAEKILTAETDKGLNQLLDEADYLYADGISVVRGIRRKYPDAQVSRIAGADLWEALMERAGKEGTPVFLVGGKPQVLAQTESKLKAQWNVNIVGSQDGYFTPQDRDALFERIKASGAKIVTIAMGSPKQELFIRACRQVHPDALYMGVGGTYDVFTGHVKRAPKAWQNLGLEWLYRLLSQPSRIKRQFKLLKFVGYYYSNKL.

It belongs to the glycosyltransferase 26 family.

The catalysed reaction is UDP-N-acetyl-alpha-D-mannosaminouronate + N-acetyl-alpha-D-glucosaminyl-di-trans,octa-cis-undecaprenyl diphosphate = beta-D-ManNAcA-(1-&gt;4)-alpha-D-GlcNAc-di-trans,octa-cis-undecaprenyl diphosphate + UDP + H(+). It functions in the pathway bacterial outer membrane biogenesis; enterobacterial common antigen biosynthesis. In terms of biological role, catalyzes the synthesis of Und-PP-GlcNAc-ManNAcA (Lipid II), the second lipid-linked intermediate involved in enterobacterial common antigen (ECA) synthesis. The polypeptide is UDP-N-acetyl-D-mannosaminuronic acid transferase (Proteus mirabilis (strain HI4320)).